A 563-amino-acid polypeptide reads, in one-letter code: Arginine--tRNA ligase (563 aa).

Positions 121–131 (PNIAKPFSIGH) match the 'HIGH' region motif.

It belongs to the class-I aminoacyl-tRNA synthetase family. In terms of assembly, monomer.

It is found in the cytoplasm. The enzyme catalyses tRNA(Arg) + L-arginine + ATP = L-arginyl-tRNA(Arg) + AMP + diphosphate. The polypeptide is Arginine--tRNA ligase (Streptococcus pyogenes serotype M4 (strain MGAS10750)).